A 23-amino-acid chain; its full sequence is Coenzyme PQQ synthesis protein A (23 aa).

Positions 15–19 (EVTLY) form a cross-link, pyrroloquinoline quinone (Glu-Tyr).

Belongs to the PqqA family.

It participates in cofactor biosynthesis; pyrroloquinoline quinone biosynthesis. Functionally, required for coenzyme pyrroloquinoline quinone (PQQ) biosynthesis. PQQ is probably formed by cross-linking a specific glutamate to a specific tyrosine residue and excising these residues from the peptide. This is Coenzyme PQQ synthesis protein A from Colwellia psychrerythraea (strain 34H / ATCC BAA-681) (Vibrio psychroerythus).